Here is a 914-residue protein sequence, read N- to C-terminus: MATFSDHETSEFLPMTRPRSTSSASQTSSDSGLSSEPAFQEDQKQPFSAPNGTTGMDNGDRYRDLEDGEAEANEPFLASSKKAATGGRARRIFWLLVLLCFGGWLLAFVLFLTGGRANYQSASDALQAQEPESASGSTSSGKPVTLEQVLTGQWSPRYHAITWVAGPNDEDGLLVEKGGGEQEGYLRVDDIQSRKNKDGKGGRVLMRKPIVHVDGKLVVPGNAWPSPDLKKVLLISDQEKNWRHSFTGKYWVLDVESQTAQPLDPSLPDGRVQLALWSPKSDAVIFVRENDVYLRKLSSDRVVTVTKDGGENLFYGVPDWVYEEEVISGRSVTWWSNDAKYVAFFRTNESAVSDFPVDYFLSRPSGKKPDPGLENYPEVRQIKYPKAGASNPVVDLQFYDVEKNEVFSVDVADDFDNDDRIIIEVVWASEGKVLVRSTNRESDILKVFLIDTKSRTGRVVRTEDVASLDGGWVEPSQSTRFIPADPSNGRPDDGYIDTVPYKGYDHLAYFSPLDSPKGVMLTSGDWEVVDAPAAVDLQRGLVYFVAAKEAPTERHIYRVQLDGSNMTAITDTSKPGYFGVSFSHGAGYALLTYNGPSVPWQAIINTHGDEITFEERIEENPQLTSMIEAYALPTEIYQNVTVDGFTLQVVERRPPHFNPAKKYPVLFYLYGGPGSQTVDRKFSIDFQSYVASSLGYIVVTVDGRGTGHIGRKARCIVRGNLGFYEARDQIATAKIWAAKSYVDESRMAIWGWSFGGFMTLKTLELDAGETFQYGMAVAPVTDWRFYDSIYSERYMHTPQHNPSGYANSTITDMAALTHPVRFLVMHGTADDNVHLQNTLVLTDKLDLSNVKNYDLHFFPDSDHSIFFHNAHAMVYDRLSSWLVNAFNGEWHRIAHPVPGESMWTRFKRSLPVLV.

The segment covering 1–10 (MATFSDHETS) has biased composition (basic and acidic residues). Positions 1–63 (MATFSDHETS…TGMDNGDRYR (63 aa)) are disordered. The Cytoplasmic segment spans residues 1–91 (MATFSDHETS…KAATGGRARR (91 aa)). Low complexity predominate over residues 20 to 35 (STSSASQTSSDSGLSS). The segment covering 45 to 56 (QPFSAPNGTTGM) has biased composition (polar residues). Residues 92 to 112 (IFWLLVLLCFGGWLLAFVLFL) traverse the membrane as a helical; Signal-anchor for type II membrane protein segment. Residues 113 to 914 (TGGRANYQSA…RFKRSLPVLV (802 aa)) are Vacuolar-facing. N-linked (GlcNAc...) asparagine glycosylation is found at Asn-348, Asn-565, and Asn-639. The active-site Charge relay system is the Ser-753. Residue Asn-807 is glycosylated (N-linked (GlcNAc...) asparagine). Residues Asp-830 and His-863 each act as charge relay system in the active site.

It belongs to the peptidase S9B family.

The protein localises to the vacuole membrane. It carries out the reaction Release of an N-terminal dipeptide, Xaa-Yaa-|-Zaa-, from a polypeptide, preferentially when Yaa is Pro, provided Zaa is neither Pro nor hydroxyproline.. Its function is as follows. Type IV dipeptidyl-peptidase which removes N-terminal dipeptides sequentially from polypeptides having unsubstituted N-termini provided that the penultimate residue is proline. The polypeptide is Probable dipeptidyl-aminopeptidase B (dapB) (Aspergillus clavatus (strain ATCC 1007 / CBS 513.65 / DSM 816 / NCTC 3887 / NRRL 1 / QM 1276 / 107)).